The primary structure comprises 453 residues: Serine protease HTRA3 (453 aa).

Positions 1-17 are cleaved as a signal peptide; sequence MQARALLLAALAALALA. The IGFBP N-terminal domain occupies 21–84; the sequence is PAAPCPARCD…ECVRGLCRCR (64 aa). Cystine bridges form between Cys-25/Cys-48, Cys-29/Cys-50, Cys-34/Cys-51, Cys-39/Cys-54, Cys-62/Cys-76, Cys-70/Cys-81, Cys-83/Cys-101, and Cys-90/Cys-126. The Kazal-like domain maps to 64–128; sequence GPLDSPCGES…RQLQKGACPL (65 aa). A serine protease region spans residues 175 to 340; sequence GSGFIMSEAG…AIPSDRITRF (166 aa). Catalysis depends on charge relay system residues His-191, Asp-227, and Ser-305. Residues 359-444 form the PDZ domain; that stretch reads IRMRTITPSL…EVRRGNDDLL (86 aa).

It belongs to the peptidase S1C family. Homotrimer. Interacts with TGFB1; the interaction inhibits TGFB-mediated signaling. Interacts with BMP4; the interaction inhibits BMP4-mediated signaling. Interacts with TGFB2 and GDF5. Interacts with MYH9. As to expression, widely expressed, with highest levels in both adult and fetal heart, ovary, uterus placenta, and bladder. In the endometrium, expressed in epithelial glands and the stroma. Also present in leukocytes. Isoform 1 is predominant in heart and skeletal muscle, whereas isoform 2 is predominant in placenta and kidney.

The protein localises to the secreted. Its function is as follows. Serine protease that cleaves beta-casein/CSN2 as well as several extracellular matrix (ECM) proteoglycans such as decorin/DCN, biglycan/BGN and fibronectin/FN1. Inhibits signaling mediated by TGF-beta family proteins possibly indirectly by degradation of these ECM proteoglycans. May act as a tumor suppressor. Negatively regulates, in vitro, trophoblast invasion during placental development and may be involved in the development of the placenta in vivo. May also have a role in ovarian development, granulosa cell differentiation and luteinization. This Homo sapiens (Human) protein is Serine protease HTRA3 (HTRA3).